Consider the following 90-residue polypeptide: Mitochondrial import inner membrane translocase subunit Tim8 A (90 aa).

Residues 36-59 carry the Twin CX3C motif motif; the sequence is CWDKCMDKPGPKLDSRAEMCFVNC. Intrachain disulfides connect Cys-36–Cys-59 and Cys-40–Cys-55.

The protein belongs to the small Tim family. Heterohexamer; composed of 3 copies of TIMM8A and 3 copies of TIMM13, named soluble 70 kDa complex. Associates with the TIM22 complex, whose core is composed of TIMM22.

The protein localises to the mitochondrion inner membrane. Its function is as follows. Mitochondrial intermembrane chaperone that participates in the import and insertion of some multi-pass transmembrane proteins into the mitochondrial inner membrane. Also required for the transfer of beta-barrel precursors from the TOM complex to the sorting and assembly machinery (SAM complex) of the outer membrane. Acts as a chaperone-like protein that protects the hydrophobic precursors from aggregation and guide them through the mitochondrial intermembrane space. The TIMM8-TIMM13 complex mediates the import of some proteins while the predominant TIMM9-TIMM10 70 kDa complex mediates the import of much more proteins. The protein is Mitochondrial import inner membrane translocase subunit Tim8 A (timm8a) of Takifugu rubripes (Japanese pufferfish).